We begin with the raw amino-acid sequence, 646 residues long: MSTAPSLSALRSSKHSGGGGGGGGGGGADPAWTSALSGNSSGPGPGSSPAGSTKPFVHAVPPSDPLRQANRLPIKVLKMLTARTGHILHPEYLQPLPSTPVSPIELDAKKSPLALLAQTCSQIGKPDPSPSSKLSSVASNGGGAGGAGGGAAGDKDTKSGPLKLSDIGVEDKSSFKPYSKPGSDKKEPGGGGGGGGGGGGGGGGVSSEKSGFRVPSATCQPFTPRTGSPSSSASACSPGGMLSSAGGAPEGKDDKKDTDVGGGGKGTGGASAEGGPTGLAHGRISCGGGINVDVNQHPDGGPGGKALGSDCGGSSGSSSGSGPSAPTSSSVLGSGLVAPVSPYKPGQTVFPLPPAGMTYPGSLAGAYAGYPPQFLPHGVALDPTKPGSLVGAQLAAAAAGSLGCSKPAGSSPLAGASPPSVMTASLCRDPYCLSYHCASHLAGAAAASASCAHDPAAAAAALKSGYPLVYPTHPLHGVHSSLTAAAAAGATPPSLAGHPLYPYGFMLPNDPLPHICNWVSANGPCDKRFATSEELLSHLRTHTAFPGTDKLLSGYPSSSSLASAAAAAMACHMHIPTSGAPGSPGTLALRSPHHALGLSSRYHPYSKSPLPTPGAPVPVPAATGPYYSPYALYGQRLTTASALGYQ.

A compositionally biased stretch (polar residues) spans 1–11 (MSTAPSLSALR). The disordered stretch occupies residues 1-70 (MSTAPSLSAL…PPSDPLRQAN (70 aa)). Residues 16–28 (SGGGGGGGGGGGA) show a composition bias toward gly residues. A compositionally biased stretch (low complexity) spans 34 to 52 (SALSGNSSGPGPGSSPAGS). At Ser-102 the chain carries Phosphoserine. The disordered stretch occupies residues 121–332 (SQIGKPDPSP…PSAPTSSSVL (212 aa)). Positions 130–139 (PSSKLSSVAS) are enriched in low complexity. 2 stretches are compositionally biased toward gly residues: residues 140–152 (NGGGAGGAGGGAA) and 189–205 (GGGGGGGGGGGGGGGGV). Lys-209 bears the N6-acetyllysine mark. Polar residues predominate over residues 217–226 (ATCQPFTPRT). Low complexity predominate over residues 227–240 (GSPSSSASACSPGG). A phosphoserine mark is found at Ser-231 and Ser-237. Basic and acidic residues predominate over residues 250 to 259 (EGKDDKKDTD). Composition is skewed to gly residues over residues 260–277 (VGGGGKGTGGASAEGGPT) and 300–315 (GGPGGKALGSDCGGSS). Positions 316–330 (GSSSGSGPSAPTSSS) are enriched in low complexity. Residues 514-542 (HICNWVSANGPCDKRFATSEELLSHLRTH) form a C2H2-type zinc finger. Omega-N-methylarginine is present on Arg-636.

This sequence belongs to the Elbow/Noc family.

The protein localises to the nucleus. Functionally, may function as a transcriptional repressor. This is Zinc finger protein 503 (ZNF503) from Homo sapiens (Human).